Consider the following 339-residue polypeptide: Serpentine receptor class alpha-22 (339 aa).

6 consecutive transmembrane segments (helical) span residues 33-53, 110-130, 150-170, 199-219, 250-270, and 284-304; these read IFIS…IQAL, VVDL…VFSL, FIAI…FYIA, VRTM…YLSV, IFII…NLLL, and IALF…VIYF.

This sequence belongs to the nematode receptor-like protein sra family.

The protein resides in the membrane. The chain is Serpentine receptor class alpha-22 (sra-22) from Caenorhabditis elegans.